We begin with the raw amino-acid sequence, 195 residues long: ATP-dependent Clp protease proteolytic subunit (195 aa).

Ser99 functions as the Nucleophile in the catalytic mechanism. The active site involves His124.

It belongs to the peptidase S14 family. In terms of assembly, fourteen ClpP subunits assemble into 2 heptameric rings which stack back to back to give a disk-like structure with a central cavity, resembling the structure of eukaryotic proteasomes.

It localises to the cytoplasm. The enzyme catalyses Hydrolysis of proteins to small peptides in the presence of ATP and magnesium. alpha-casein is the usual test substrate. In the absence of ATP, only oligopeptides shorter than five residues are hydrolyzed (such as succinyl-Leu-Tyr-|-NHMec, and Leu-Tyr-Leu-|-Tyr-Trp, in which cleavage of the -Tyr-|-Leu- and -Tyr-|-Trp bonds also occurs).. In terms of biological role, cleaves peptides in various proteins in a process that requires ATP hydrolysis. Has a chymotrypsin-like activity. Plays a major role in the degradation of misfolded proteins. This is ATP-dependent Clp protease proteolytic subunit from Carboxydothermus hydrogenoformans (strain ATCC BAA-161 / DSM 6008 / Z-2901).